The chain runs to 169 residues: Peptide methionine sulfoxide reductase MsrA (169 aa).

The active site involves Cys10.

It belongs to the MsrA Met sulfoxide reductase family.

It catalyses the reaction L-methionyl-[protein] + [thioredoxin]-disulfide + H2O = L-methionyl-(S)-S-oxide-[protein] + [thioredoxin]-dithiol. The catalysed reaction is [thioredoxin]-disulfide + L-methionine + H2O = L-methionine (S)-S-oxide + [thioredoxin]-dithiol. Its function is as follows. Has an important function as a repair enzyme for proteins that have been inactivated by oxidation. Catalyzes the reversible oxidation-reduction of methionine sulfoxide in proteins to methionine. This is Peptide methionine sulfoxide reductase MsrA from Streptococcus equi subsp. zooepidemicus (strain H70).